A 246-amino-acid polypeptide reads, in one-letter code: Nodulation protein G (246 aa).

NAD(+) is bound at residue 8 to 32 (VTGAMGGLGTAICQALAKDGCIVAA). Residue serine 140 coordinates substrate. Residue tyrosine 153 is the Proton acceptor of the active site.

Belongs to the short-chain dehydrogenases/reductases (SDR) family.

Its function is as follows. Proposed to modify Nod factor fatty acyl chain. The protein is Nodulation protein G (nodG) of Azospirillum brasilense.